A 267-amino-acid chain; its full sequence is GTP cyclohydrolase FolE2 (267 aa).

The protein belongs to the GTP cyclohydrolase IV family.

The catalysed reaction is GTP + H2O = 7,8-dihydroneopterin 3'-triphosphate + formate + H(+). It participates in cofactor biosynthesis; 7,8-dihydroneopterin triphosphate biosynthesis; 7,8-dihydroneopterin triphosphate from GTP: step 1/1. In terms of biological role, converts GTP to 7,8-dihydroneopterin triphosphate. The protein is GTP cyclohydrolase FolE2 of Nitrosococcus oceani (strain ATCC 19707 / BCRC 17464 / JCM 30415 / NCIMB 11848 / C-107).